The sequence spans 155 residues: MRLRLIAVGSRMPKWVEEGWHEYAKRLPSELALELVEIPLNTRGKNADVARFIRQEGEAMLAKVGHNERIVTLEVHGKPWSTEQLAVELDRWRLDSRTVNFMVGGPEGLAPEVCARADQRWSLSPLTLPHPLVRILIGEQLYRAWTVLSGHPYHK.

S-adenosyl-L-methionine-binding positions include leucine 73, glycine 104, and 123–128 (LSPLTL).

This sequence belongs to the RNA methyltransferase RlmH family. As to quaternary structure, homodimer.

The protein localises to the cytoplasm. The enzyme catalyses pseudouridine(1915) in 23S rRNA + S-adenosyl-L-methionine = N(3)-methylpseudouridine(1915) in 23S rRNA + S-adenosyl-L-homocysteine + H(+). Specifically methylates the pseudouridine at position 1915 (m3Psi1915) in 23S rRNA. This Pseudomonas fluorescens (strain ATCC BAA-477 / NRRL B-23932 / Pf-5) protein is Ribosomal RNA large subunit methyltransferase H.